A 240-amino-acid polypeptide reads, in one-letter code: 2,3,4,5-tetrahydropyridine-2,6-dicarboxylate N-acetyltransferase (240 aa).

This sequence belongs to the transferase hexapeptide repeat family. DapH subfamily.

The catalysed reaction is (S)-2,3,4,5-tetrahydrodipicolinate + acetyl-CoA + H2O = L-2-acetamido-6-oxoheptanedioate + CoA. The protein operates within amino-acid biosynthesis; L-lysine biosynthesis via DAP pathway; LL-2,6-diaminopimelate from (S)-tetrahydrodipicolinate (acetylase route): step 1/3. Catalyzes the transfer of an acetyl group from acetyl-CoA to tetrahydrodipicolinate. The sequence is that of 2,3,4,5-tetrahydropyridine-2,6-dicarboxylate N-acetyltransferase from Bacillus cytotoxicus (strain DSM 22905 / CIP 110041 / 391-98 / NVH 391-98).